Consider the following 561-residue polypeptide: Mesoderm induction early response protein 2 (561 aa).

2 disordered regions span residues 1-28 and 52-188; these read MAEA…GEPN and QNYG…EDPL. Ser11 carries the post-translational modification Phosphoserine. Over residues 140 to 165 the composition is skewed to polar residues; the sequence is QSSADDLTPSVTSHEASDLFPSQSGS. Residues 195–292 enclose the ELM2 domain; the sequence is KEIMVGPQFQ…EALRRLRFNV (98 aa). An SANT domain is found at 297–349; the sequence is DGLCAWSEEERRNFEHGFRVHGKNFHLIQANKVRTRSVGECVEYYYLWKKSER. The tract at residues 360 to 515 is disordered; the sequence is GRRKYGPSGN…DGEPEETVGP (156 aa). Low complexity predominate over residues 417 to 428; the sequence is LSMGSSMSRSLG. Residues 439–451 are compositionally biased toward pro residues; that stretch reads SSEPGPRLFPPLD. The span at 453-482 shows a compositional bias: low complexity; it reads PSALPSSRRPPALAEPAFFPPATAAPEPGA.

Part of a complex containing at least CDYL, MIER1, MIER2, HDAC1 and HDAC2.

Its subcellular location is the nucleus. Transcriptional repressor. The protein is Mesoderm induction early response protein 2 (MIER2) of Bos taurus (Bovine).